The following is a 1767-amino-acid chain: Endo-alpha-N-acetylgalactosaminidase (1767 aa).

The N-terminal stretch at 1–39 (MNKGLFEKRCKYSIRKFSLGVASVMIGAAFFGTSPVLAD) is a signal peptide. Basic and acidic residues-rich tracts occupy residues 61–75 (KEND…KVGE) and 84–111 (DGPK…DKPA). Disordered regions lie at residues 61–124 (KEND…VTPE) and 301–324 (VKTD…GPEV). Positions 112-124 (AAKPETPKTVTPE) are enriched in low complexity. Over residues 304–324 (DNQEGVKTEDTPAEKETGPEV) the composition is skewed to basic and acidic residues. Positions 577, 579, 581, 583, and 588 each coordinate Ca(2+). Residues 602 to 893 (GWEKVKDITA…DVMTKYFQHF (292 aa)) form a catalytic region. Asp658 provides a ligand contact to substrate. The Nucleophile role is filled by Asp764. The active-site Proton donor/acceptor is Glu796. Ca(2+) contacts are provided by Asp1233, Glu1235, Glu1281, Trp1284, and Asp1411. Residues 1711–1730 (LASEQGKTPDYKQEIARPET) form a disordered region. Positions 1717–1730 (KTPDYKQEIARPET) are enriched in basic and acidic residues. Positions 1735-1739 (LPATG) match the LPXTG sorting signal motif. Thr1738 bears the Pentaglycyl murein peptidoglycan amidated threonine mark. Positions 1739–1767 (GESQSDTALILASVSLALSALFVVKTKKD) are cleaved as a propeptide — removed by sortase.

It belongs to the glycosyl hydrolase 101 family. A subfamily.

It localises to the secreted. It is found in the cell wall. It catalyses the reaction a 3-O-[beta-D-galactosyl-(1-&gt;3)-N-acetyl-alpha-D-galactosaminyl]-L-threonyl-[protein] + H2O = beta-D-galactosyl-(1-&gt;3)-N-acetyl-D-galactosamine + L-threonyl-[protein]. The enzyme catalyses a 3-O-[beta-D-galactosyl-(1-&gt;3)-N-acetyl-alpha-D-galactosaminyl]-L-seryl-[protein] + H2O = beta-D-galactosyl-(1-&gt;3)-N-acetyl-D-galactosamine + L-seryl-[protein]. Its function is as follows. Involved in the breakdown of mucin-type O-linked glycans. Specifically removes the T-antigen disaccharide (Gal-beta-1,3-GalNAc-alpha) from extracellular host glycoproteins. Representative of a broadly important class of virulence factors. This Streptococcus pneumoniae serotype 4 (strain ATCC BAA-334 / TIGR4) protein is Endo-alpha-N-acetylgalactosaminidase.